The sequence spans 391 residues: MAIINMSDLDLQGKRVLIREDLNVPVSNGVVTSDARLRASLPTIELALAKGAAVMVMSHLGRPTEGEYNSEFSMQPVVDYLAKALSCTVRLATDYLDGVEVAVGEVVVFENVRFNKGEKKNDEALSKKMAALCDVYVMDAFGTAHRAEASTNGVGLYAPIACAGPLLAQELDALGKALDNPARPLVAIVGGSKVSTKLTVLESLSGIVDQLVVGGGIANTFIAAAGHNVGKSLYEADLIDEAKRLVANAQSRGGDIPVPTDVVVAGEFSPTATATLKSVSDVSDSDMIFDIGPDSAEALAKIIESAGTIVWNGPVGVFEFDQFGEGTKRIAQAIADSKAFSIAGGGDTLAAVDKYGIADKVSYISTGGGAFLEFLEGKELPAVAMLKKRGA.

Substrate-binding positions include 21 to 23 (DLN), Arg-36, 59 to 62 (HLGR), Arg-113, and Arg-146. ATP contacts are provided by residues Lys-197, Glu-319, and 345-348 (GGDT).

The protein belongs to the phosphoglycerate kinase family. As to quaternary structure, monomer.

It localises to the cytoplasm. It catalyses the reaction (2R)-3-phosphoglycerate + ATP = (2R)-3-phospho-glyceroyl phosphate + ADP. Its pathway is carbohydrate degradation; glycolysis; pyruvate from D-glyceraldehyde 3-phosphate: step 2/5. In Shewanella sp. (strain W3-18-1), this protein is Phosphoglycerate kinase.